The chain runs to 426 residues: MRAWPRPVVPAVAGEPPVPTLFDTSAGSVRPAECTGDGRVGLYVCGITPYDATHIGHASTYLAFDTLQRVWLDRGYDVAYVQNVTDVDDPLLERATATGVDWRDLAAEQVELFRTDMEALRILPPDSYVGVTEVVDEVAAAVAELVRRGTAYPVATPDAAQPGARDLYFDVARAGADGPWALGDESGYDRDTMAALSAERGGDPERPGKRDPLDPLLWRAERADEPAWDSAVGRGRPGWHIECAVIALRKLDRPVTVQGGGSDLIFPHHEMSAGHAAALTGEDFACVYAHSGMVAYQGEKMSKSLGNLVLVSRLRAAGVDPRAIRLALLAQHYRADWEWTDALLAESVARLAAWDAWAADAASTDADAGEPGELVQLVRERLADDLDTPGAILLLDLRVATGVPATPVEVAAVDALLGVALGSPAA.

C45 contributes to the Zn(2+) binding site. L-cysteinyl-5'-AMP is bound by residues 45 to 48, T60, and 83 to 85; these read CGIT and NVT. Residues 47-57 carry the 'HIGH' region motif; that stretch reads ITPYDATHIGH. Positions 199–204 match the 'ERGGDP' region motif; the sequence is ERGGDP. W239 provides a ligand contact to L-cysteinyl-5'-AMP. C243 serves as a coordination point for Zn(2+). An L-cysteinyl-5'-AMP-binding site is contributed by 261–263; the sequence is GSD. H268 lines the Zn(2+) pocket. An L-cysteinyl-5'-AMP-binding site is contributed by V294. Positions 300–304 match the 'KMSKS' region motif; it reads KMSKS.

The protein belongs to the class-I aminoacyl-tRNA synthetase family. MshC subfamily. Monomer. Zn(2+) serves as cofactor.

It carries out the reaction 1D-myo-inositol 2-amino-2-deoxy-alpha-D-glucopyranoside + L-cysteine + ATP = 1D-myo-inositol 2-(L-cysteinylamino)-2-deoxy-alpha-D-glucopyranoside + AMP + diphosphate + H(+). In terms of biological role, catalyzes the ATP-dependent condensation of GlcN-Ins and L-cysteine to form L-Cys-GlcN-Ins. This is L-cysteine:1D-myo-inositol 2-amino-2-deoxy-alpha-D-glucopyranoside ligase from Clavibacter michiganensis subsp. michiganensis (strain NCPPB 382).